Consider the following 116-residue polypeptide: Nucleoid-associated protein P9515_00191 (116 aa).

Basic and acidic residues predominate over residues Ser-89–Asn-98. Residues Ser-89 to Ser-116 form a disordered region. Low complexity predominate over residues Asp-99–Ser-116.

It belongs to the YbaB/EbfC family. As to quaternary structure, homodimer.

The protein resides in the cytoplasm. It localises to the nucleoid. Binds to DNA and alters its conformation. May be involved in regulation of gene expression, nucleoid organization and DNA protection. The polypeptide is Nucleoid-associated protein P9515_00191 (Prochlorococcus marinus (strain MIT 9515)).